Consider the following 756-residue polypeptide: MYNSSTNHHEGAPTSGHGYYMSQQQDQQHQQQQQYANEMNPYQQIPRPPAAGFSSNYMKEQGSHQSLQEHLQRETGNLGSGFTDVPALNYPATPPPHNNYAASNQMINTPPPSMGGLYRHNNNSQSMVQNGNGSGNAQLPQLSPGQYSIESEYNQNLNGSSSSSPFHQPQTLRSNGSYSSGLRSVKSFQRLQQEQENVQVQQQLSQAQQQNSRQQQQQLQYQQQQQQQQQQQHMQIQQQQQQQQQQQQSQSPVQSGFNNGTISNYMYFERRPDLLTKGTQDKAAAVKLKIENFYQSSVKYAIERNERRVELETELTSHNWSEERKSRQLSSLGKKESQFLRLRRTRLSLEDFHTVKVIGKGAFGEVRLVQKKDTGKIYAMKTLLKSEMYKKDQLAHVKAERDVLAGSDSPWVVSLYYSFQDAQYLYLIMEFLPGGDLMTMLIRWQLFTEDVTRFYMAECILAIETIHKLGFIHRDIKPDNILIDIRGHIKLSDFGLSTGFHKTHDSNYYKKLLQQDEATNGISKPGTYNANTTDTANKRQTMVVDSISLTMSNRQQIQTWRKSRRLMAYSTVGTPDYIAPEIFLYQGYGQECDWWSLGAIMYECLIGWPPFCSETPQETYRKIMNFEQTLQFPDDIHISYEAEDLIRRLLTHADQRLGRHGGADEIKSHPFFRGVDWNTIRQVEAPYIPKLSSITDTRFFPTDELENVPDSPAMAQAAKQREQMTKQGGSAPVKEDLPFIGYTYSRFDYLTRKNAL.

2 disordered regions span residues 1-180 (MYNS…SYSS) and 242-261 (QQQQ…NNGT). Positions 23-34 (QQQDQQHQQQQQ) are enriched in low complexity. The span at 53–77 (FSSNYMKEQGSHQSLQEHLQRETGN) shows a compositional bias: polar residues. Position 109 is a phosphothreonine (Thr-109). Residues 120–180 (HNNNSQSMVQ…TLRSNGSYSS (61 aa)) show a composition bias toward polar residues. Over residues 242–255 (QQQQQQQSQSPVQS) the composition is skewed to low complexity. Residues 352 to 672 (FHTVKVIGKG…ADEIKSHPFF (321 aa)) enclose the Protein kinase domain. Residues 358 to 366 (IGKGAFGEV) and Lys-381 contribute to the ATP site. The active-site Proton acceptor is Asp-475. Residues 673–754 (RGVDWNTIRQ…SRFDYLTRKN (82 aa)) enclose the AGC-kinase C-terminal domain. Residues 707 to 732 (NVPDSPAMAQAAKQREQMTKQGGSAP) are disordered.

The protein belongs to the protein kinase superfamily. STE Ser/Thr protein kinase family. COT1 subfamily. Associates with PAG1/TAO3 and interacts with MOB2.

It carries out the reaction L-seryl-[protein] + ATP = O-phospho-L-seryl-[protein] + ADP + H(+). The catalysed reaction is L-threonyl-[protein] + ATP = O-phospho-L-threonyl-[protein] + ADP + H(+). Functionally, protein kinase that seems to play a role in the regulation of cell morphogenesis and proliferation. This chain is Serine/threonine-protein kinase CBK1 (CBK1), found in Saccharomyces cerevisiae (strain ATCC 204508 / S288c) (Baker's yeast).